Reading from the N-terminus, the 131-residue chain is MEMGKWIHLELRNRTPSDVKELFLDNSQSNEGKLEGLTDEFEELELLNTINIGLTSIANLPKLNKLKKLELSSNRASVGLEVLAEKCPNLIHLNLSGNKIKDLSTIEPLKKLENLESLDLFTCEVTNLNNY.

LRR repeat units lie at residues 18 to 38 (DVKE…EGLT), 43 to 64 (ELEL…PKLN), 65 to 87 (KLKK…AEKC), 89 to 110 (NLIH…EPLK), and 114 to 131 (NLES…LNNY).

The protein belongs to the ANP32 family.

The sequence is that of Acidic leucine-rich nuclear phosphoprotein 32 family member D (ANP32D) from Homo sapiens (Human).